Here is a 480-residue protein sequence, read N- to C-terminus: Ochratoxinase (480 aa).

Residues histidine 111, histidine 113, lysine 246, histidine 287, and histidine 307 each contribute to the Zn(2+) site. Lysine 246 is a catalytic residue. Aspartate 378 is a catalytic residue.

The protein belongs to the metallo-dependent hydrolases superfamily. Ochratoxinase amidase 2 family. Homooctamer. Requires Zn(2+) as cofactor.

The protein localises to the secreted. The enzyme catalyses ochratoxin A + H2O = ochratoxin alpha + L-phenylalanine. The Zn(2+)-specific chelator 1,10-phenanthroline inhibits the enzyme activity. In terms of biological role, carboxypeptidase that catalyzes the release of a C-terminal amino acid with specific catalytic activity for aromatic amino acids such as phenylalanine. Is able to degrade ochratoxin A, one of the five major mycotoxins most harmful to humans and animals that is produced by Aspergillus and Penicillium species and occurs in a wide range of agricultural products. This Aspergillus niger (strain ATCC MYA-4892 / CBS 513.88 / FGSC A1513) protein is Ochratoxinase.